A 508-amino-acid chain; its full sequence is Photosystem II CP47 reaction center protein (508 aa).

6 consecutive transmembrane segments (helical) span residues 21 to 36, 101 to 115, 140 to 156, 203 to 218, 237 to 252, and 457 to 472; these read SVHI…WAGS, IVFS…IWHW, GIHL…FGAF, IAAG…FHLS, VLSS…AFVV, and TFAL…HGAR.

This sequence belongs to the PsbB/PsbC family. PsbB subfamily. PSII is composed of 1 copy each of membrane proteins PsbA, PsbB, PsbC, PsbD, PsbE, PsbF, PsbH, PsbI, PsbJ, PsbK, PsbL, PsbM, PsbT, PsbX, PsbY, PsbZ, Psb30/Ycf12, at least 3 peripheral proteins of the oxygen-evolving complex and a large number of cofactors. It forms dimeric complexes. Binds multiple chlorophylls. PSII binds additional chlorophylls, carotenoids and specific lipids. serves as cofactor.

The protein localises to the plastid. The protein resides in the chloroplast thylakoid membrane. One of the components of the core complex of photosystem II (PSII). It binds chlorophyll and helps catalyze the primary light-induced photochemical processes of PSII. PSII is a light-driven water:plastoquinone oxidoreductase, using light energy to abstract electrons from H(2)O, generating O(2) and a proton gradient subsequently used for ATP formation. This Chloranthus spicatus (Chulantree) protein is Photosystem II CP47 reaction center protein.